The following is a 309-amino-acid chain: Olfactory receptor 10J5 (309 aa).

The Extracellular portion of the chain corresponds to 1–25; it reads MKRKNFTEVSEFIFLGFSSFGKHQI. N-linked (GlcNAc...) asparagine glycosylation is present at Asn-5. Residues 26–46 form a helical membrane-spanning segment; that stretch reads TLFVVFLTVYILTLVANIIIV. The Cytoplasmic portion of the chain corresponds to 47–54; the sequence is TIICIDHH. A helical membrane pass occupies residues 55-75; that stretch reads LHTPMYFFLSMLASSETVYTL. The Extracellular segment spans residues 76 to 99; it reads VIVPRMLLSLIFHNQPISLAGCAT. Cys-97 and Cys-188 form a disulfide bridge. Residues 100–120 traverse the membrane as a helical segment; sequence QMFFFVILATNNCFLLTAMGY. Over 121-139 the chain is Cytoplasmic; that stretch reads DRYVAICRPLRYTVIMSKG. The chain crosses the membrane as a helical span at residues 140-160; the sequence is LCAQLVCGSFGIGLTMAVLHV. At 161 to 196 the chain is on the extracellular side; sequence TAMFNLPFCGTVVDHFFCDIYPVMKLSCIDTTINEI. A helical membrane pass occupies residues 197 to 216; it reads INYGVSSFVIFVPIGLIFIS. Residues 217 to 236 lie on the Cytoplasmic side of the membrane; that stretch reads YVLVISSILQIASAEGRKKT. Residues 237-257 traverse the membrane as a helical segment; the sequence is FATCVSHLTVVIVHCGCASIA. Residues 258-270 are Extracellular-facing; sequence YLKPKSESSIEKD. The helical transmembrane segment at 271-291 threads the bilayer; that stretch reads LVLSVTYTIITPLLNPVVYSL. Topologically, residues 292–309 are cytoplasmic; the sequence is RNKEVKDALCRVVGRNIS.

Belongs to the G-protein coupled receptor 1 family. Expressed in both the aorta, the coronary artery and umbilical vein endothelial cells (HUVECs) (at protein level).

The protein resides in the cell membrane. Olfactory receptor. Activated by the synthetic floral odorant, lyral, and by alpha-cedrene, a sesquiterpene constituent of cedarwood oil. Its activation increases intracellular Ca(2+). Acts as a key regulator of myogenesis through its actions on cell migration and adhesion by activating the Ca(2+)-dependent AKT signal transduction pathway. Also acts as a regulator of angiogenesis. Moreover, plays a role in the regulation of lipid accumulation in hepatocytes via the cAMP-PKA pathway. May be involved in sperm chemotaxis and motility. The protein is Olfactory receptor 10J5 of Homo sapiens (Human).